Here is a 331-residue protein sequence, read N- to C-terminus: Adenosine deaminase (331 aa).

His-12 and His-14 together coordinate Zn(2+). Substrate contacts are provided by His-14, Asp-16, and Gly-170. His-197 contributes to the Zn(2+) binding site. Catalysis depends on Glu-200, which acts as the Proton donor. Zn(2+) is bound at residue Asp-278.

This sequence belongs to the metallo-dependent hydrolases superfamily. Adenosine and AMP deaminases family. Adenosine deaminase subfamily. It depends on Zn(2+) as a cofactor.

It carries out the reaction adenosine + H2O + H(+) = inosine + NH4(+). It catalyses the reaction 2'-deoxyadenosine + H2O + H(+) = 2'-deoxyinosine + NH4(+). In terms of biological role, catalyzes the hydrolytic deamination of adenosine and 2-deoxyadenosine. The chain is Adenosine deaminase from Vibrio vulnificus (strain YJ016).